Consider the following 189-residue polypeptide: Ribosome-recycling factor (189 aa).

It belongs to the RRF family.

It localises to the cytoplasm. Its function is as follows. Responsible for the release of ribosomes from messenger RNA at the termination of protein biosynthesis. May increase the efficiency of translation by recycling ribosomes from one round of translation to another. This chain is Ribosome-recycling factor, found in Salinibacter ruber (strain DSM 13855 / M31).